A 142-amino-acid polypeptide reads, in one-letter code: Large ribosomal subunit protein uL11 (142 aa).

This sequence belongs to the universal ribosomal protein uL11 family. In terms of assembly, part of the ribosomal stalk of the 50S ribosomal subunit. Interacts with L10 and the large rRNA to form the base of the stalk. L10 forms an elongated spine to which L12 dimers bind in a sequential fashion forming a multimeric L10(L12)X complex. In terms of processing, one or more lysine residues are methylated.

In terms of biological role, forms part of the ribosomal stalk which helps the ribosome interact with GTP-bound translation factors. This Pseudoalteromonas atlantica (strain T6c / ATCC BAA-1087) protein is Large ribosomal subunit protein uL11.